Consider the following 123-residue polypeptide: PTS system glucitol/sorbitol-specific EIIA component (123 aa).

The PTS EIIA type-5 domain occupies 1-116 (MTVIYQTTIT…PDDIAPGSVL (116 aa)). The active-site Tele-phosphohistidine intermediate is His-43. A Phosphohistidine; by HPr modification is found at His-43.

The protein resides in the cytoplasm. In terms of biological role, the phosphoenolpyruvate-dependent sugar phosphotransferase system (sugar PTS), a major carbohydrate active transport system, catalyzes the phosphorylation of incoming sugar substrates concomitantly with their translocation across the cell membrane. The enzyme II complex composed of SrlA, SrlB and SrlE is involved in glucitol/sorbitol transport. This chain is PTS system glucitol/sorbitol-specific EIIA component (srlB), found in Shigella flexneri.